The primary structure comprises 173 residues: Soluble secreted antigen MPT53 (173 aa).

An N-terminal signal peptide occupies residues 1–38 (MSLRLVSPIKAFADGIVAVAIAVVLMFGLANTPRAVAA). A disulfide bridge links C73 with C76.

The protein belongs to the thioredoxin family.

It is found in the secreted. Functionally, disulfide oxidoreductase that catalyzes the oxidation of reduced, unfolded secreted proteins to form disulfide bonds. Despite a weak homology to thioredoxin this cannot serve as a substrate for thioredoxin reductase. This chain is Soluble secreted antigen MPT53 (mpt53), found in Mycobacterium bovis (strain ATCC BAA-935 / AF2122/97).